The following is a 697-amino-acid chain: Phosphoribosylformylglycinamidine synthase subunit PurL (697 aa).

His34 is a catalytic residue. ATP-binding residues include Tyr37 and Lys76. Glu78 contributes to the Mg(2+) binding site. Substrate is bound by residues 79 to 82 and Arg101; that span reads SHNH. His80 serves as the catalytic Proton acceptor. Asp102 provides a ligand contact to Mg(2+). Residue Gln224 participates in substrate binding. Position 250 (Asp250) interacts with Mg(2+). 294 to 296 is a substrate binding site; the sequence is ETQ. Residues Asp472 and Gly509 each contribute to the ATP site. Ser512 provides a ligand contact to substrate.

The protein belongs to the FGAMS family. Monomer. Part of the FGAM synthase complex composed of 1 PurL, 1 PurQ and 2 PurS subunits.

Its subcellular location is the cytoplasm. The catalysed reaction is N(2)-formyl-N(1)-(5-phospho-beta-D-ribosyl)glycinamide + L-glutamine + ATP + H2O = 2-formamido-N(1)-(5-O-phospho-beta-D-ribosyl)acetamidine + L-glutamate + ADP + phosphate + H(+). The protein operates within purine metabolism; IMP biosynthesis via de novo pathway; 5-amino-1-(5-phospho-D-ribosyl)imidazole from N(2)-formyl-N(1)-(5-phospho-D-ribosyl)glycinamide: step 1/2. Part of the phosphoribosylformylglycinamidine synthase complex involved in the purines biosynthetic pathway. Catalyzes the ATP-dependent conversion of formylglycinamide ribonucleotide (FGAR) and glutamine to yield formylglycinamidine ribonucleotide (FGAM) and glutamate. The FGAM synthase complex is composed of three subunits. PurQ produces an ammonia molecule by converting glutamine to glutamate. PurL transfers the ammonia molecule to FGAR to form FGAM in an ATP-dependent manner. PurS interacts with PurQ and PurL and is thought to assist in the transfer of the ammonia molecule from PurQ to PurL. This chain is Phosphoribosylformylglycinamidine synthase subunit PurL, found in Pyrobaculum aerophilum (strain ATCC 51768 / DSM 7523 / JCM 9630 / CIP 104966 / NBRC 100827 / IM2).